The following is a 127-amino-acid chain: Ribosome-binding factor A (127 aa).

It belongs to the RbfA family. Monomer. Binds 30S ribosomal subunits, but not 50S ribosomal subunits or 70S ribosomes.

The protein localises to the cytoplasm. One of several proteins that assist in the late maturation steps of the functional core of the 30S ribosomal subunit. Associates with free 30S ribosomal subunits (but not with 30S subunits that are part of 70S ribosomes or polysomes). Required for efficient processing of 16S rRNA. May interact with the 5'-terminal helix region of 16S rRNA. In Chloroflexus aggregans (strain MD-66 / DSM 9485), this protein is Ribosome-binding factor A.